The following is a 232-amino-acid chain: DNA damage-inducible transcript 4 protein (232 aa).

Residues 1–71 are disordered; sequence MPSLWDRFSS…SGFGPEEDTA (71 aa). The span at 9 to 22 shows a compositional bias: low complexity; it reads SSSSTSSSPSSLPR. The residue at position 19 (Ser-19) is a Phosphoserine. 2 positions are modified to phosphothreonine: Thr-23 and Thr-25. Ser-121 carries the post-translational modification Phosphoserine.

Belongs to the DDIT4 family. As to quaternary structure, monomer. Interacts with BTRC. Identified in a complex with CUL4A, DDB1 and BTRC. Interacts with TXNIP; this inhibits the proteasomal degradation of DDIT4. Post-translationally, phosphorylated by GSK3B; this promotes proteasomal degradation. In terms of processing, polyubiquitinated by a DCX (DDB1-CUL4A-RBX1) E3 ubiquitin-protein ligase complex with BTRC as substrate-recognition component, leading to its proteasomal degradation. Broadly expressed, with lowest levels in brain, skeletal muscle and intestine. Up-regulated in substantia nigra neurons from Parkinson disease patients (at protein level).

It is found in the mitochondrion. The protein resides in the cytoplasm. It localises to the cytosol. Regulates cell growth, proliferation and survival via inhibition of the activity of the mammalian target of rapamycin complex 1 (mTORC1). Inhibition of mTORC1 is mediated by a pathway that involves DDIT4/REDD1, AKT1, the TSC1-TSC2 complex and the GTPase RHEB. Plays an important role in responses to cellular energy levels and cellular stress, including responses to hypoxia and DNA damage. Regulates p53/TP53-mediated apoptosis in response to DNA damage via its effect on mTORC1 activity. Its role in the response to hypoxia depends on the cell type; it mediates mTORC1 inhibition in fibroblasts and thymocytes, but not in hepatocytes. Required for mTORC1-mediated defense against viral protein synthesis and virus replication. Inhibits neuronal differentiation and neurite outgrowth mediated by NGF via its effect on mTORC1 activity. Required for normal neuron migration during embryonic brain development. Plays a role in neuronal cell death. The polypeptide is DNA damage-inducible transcript 4 protein (DDIT4) (Homo sapiens (Human)).